A 356-amino-acid chain; its full sequence is Naringenin,2-oxoglutarate 3-dioxygenase (356 aa).

The 105-residue stretch at 188 to 292 (CVDMDQKVVV…RLSIATFQNP (105 aa)) folds into the Fe2OG dioxygenase domain. The Fe cation site is built by His-215, Asp-217, and His-273. Arg-283 contacts 2-oxoglutarate.

The protein belongs to the iron/ascorbate-dependent oxidoreductase family. Requires Fe(2+) as cofactor. The cofactor is L-ascorbate.

The enzyme catalyses a (2S)-flavan-4-one + 2-oxoglutarate + O2 = a (2R,3R)-dihydroflavonol + succinate + CO2. It participates in secondary metabolite biosynthesis; flavonoid biosynthesis. Catalyzes the 3-beta-hydroxylation of 2S-flavanones to 2R,3R-dihydroflavonols which are intermediates in the biosynthesis of flavonols, anthocyanidins, catechins and proanthocyanidins in plants. This Callistephus chinensis (China aster) protein is Naringenin,2-oxoglutarate 3-dioxygenase (FHT).